The primary structure comprises 631 residues: tRNA uridine 5-carboxymethylaminomethyl modification enzyme MnmG (631 aa).

FAD is bound at residue 15 to 20; the sequence is GAGHAG. A disordered region spans residues 214–233; sequence YSKTEEEPGDKEPRHFSFTS. 276-290 serves as a coordination point for NAD(+); that stretch reads GPRYCPSIETKVVRF.

This sequence belongs to the MnmG family. Homodimer. Heterotetramer of two MnmE and two MnmG subunits. It depends on FAD as a cofactor.

It is found in the cytoplasm. Functionally, NAD-binding protein involved in the addition of a carboxymethylaminomethyl (cmnm) group at the wobble position (U34) of certain tRNAs, forming tRNA-cmnm(5)s(2)U34. The polypeptide is tRNA uridine 5-carboxymethylaminomethyl modification enzyme MnmG (Lactobacillus delbrueckii subsp. bulgaricus (strain ATCC BAA-365 / Lb-18)).